The following is a 452-amino-acid chain: Cell division protein FtsZ (452 aa).

Residues 24-28 (GAGSN), 111-113 (GTG), Glu142, Arg146, and Asp190 each bind GTP. The interval 432-452 (DQDNKESDIHDIPAFLRKKRD) is disordered. The span at 433-442 (QDNKESDIHD) shows a compositional bias: basic and acidic residues.

The protein belongs to the FtsZ family. As to quaternary structure, homodimer. Polymerizes to form a dynamic ring structure in a strictly GTP-dependent manner. Interacts directly with several other division proteins.

It localises to the cytoplasm. In terms of biological role, essential cell division protein that forms a contractile ring structure (Z ring) at the future cell division site. The regulation of the ring assembly controls the timing and the location of cell division. One of the functions of the FtsZ ring is to recruit other cell division proteins to the septum to produce a new cell wall between the dividing cells. Binds GTP and shows GTPase activity. This chain is Cell division protein FtsZ, found in Rickettsia conorii (strain ATCC VR-613 / Malish 7).